A 312-amino-acid polypeptide reads, in one-letter code: Ribosomal protein L11 methyltransferase (312 aa).

4 residues coordinate S-adenosyl-L-methionine: Thr-160, Gly-181, Asp-203, and Asn-246.

It belongs to the methyltransferase superfamily. PrmA family.

The protein localises to the cytoplasm. The enzyme catalyses L-lysyl-[protein] + 3 S-adenosyl-L-methionine = N(6),N(6),N(6)-trimethyl-L-lysyl-[protein] + 3 S-adenosyl-L-homocysteine + 3 H(+). Methylates ribosomal protein L11. This is Ribosomal protein L11 methyltransferase from Staphylococcus epidermidis (strain ATCC 12228 / FDA PCI 1200).